The chain runs to 605 residues: MNHFPKLLSSQIGFDVAQTMLEYFDRHYRIFREAAVDAKTLFERGDWHGLQRLARERITSYDERVKECVEVLEDEYDAENIDDEVWQQIKLHYIGLLTSHRQPECAETFFNSVCCKILHRSYFSNDFIFVRPAISTEYLENDEPAAKPTYRAYYPGTDGLAVTLERIVTNFQLDPPFEDLTRDIGCVMQAIDDEFGHFDEAPNFQIHVLSSLFFRNKSAYIVGRIINADRVLPFAVPIRHVRPGVLALDTVLLRRDLLQIIFSFSHSYFLVDMGVPSAYVDFLCTIMPGKPKAEIYTSVGLQKQGKNLFYRDLLHHLSHSSDRFIIAPGIKGLVMLVFTLPSFPYVFKIIKDHFPPPKETTRAQIMEKYQLVKRHDRLGRMADTLEYSSVALPLARLDHALVRELEKEVPSLLEYEDDKLVIKHLYIERRMTPLNLYLQNGSDADVEHGVKEYGNAVKELMKANIFPGDMLYKNFGVTRHGRVVFYDYDEIEYLTDCNVRRVPPPRNEEDELSGEPWYTVGPHDIFPETYGPFLLGDPRVRSVFMKHHADFFDPALWQASKDKLMQGELPDFYPYDAALRFSVRYPARFGATGENDGAGDAQRAA.

Residues 327-333 (APGIKGL) and K348 each bind ATP. D383 is a catalytic residue.

It belongs to the AceK family.

It localises to the cytoplasm. It catalyses the reaction L-seryl-[isocitrate dehydrogenase] + ATP = O-phospho-L-seryl-[isocitrate dehydrogenase] + ADP + H(+). Its function is as follows. Bifunctional enzyme which can phosphorylate or dephosphorylate isocitrate dehydrogenase (IDH) on a specific serine residue. This is a regulatory mechanism which enables bacteria to bypass the Krebs cycle via the glyoxylate shunt in response to the source of carbon. When bacteria are grown on glucose, IDH is fully active and unphosphorylated, but when grown on acetate or ethanol, the activity of IDH declines drastically concomitant with its phosphorylation. The protein is Isocitrate dehydrogenase kinase/phosphatase of Burkholderia orbicola (strain MC0-3).